The following is a 222-amino-acid chain: Large ribosomal subunit protein uL4 (222 aa).

The interval 50–72 is disordered; the sequence is TRGRSEVSHSTKKPFRQKGTGNA.

This sequence belongs to the universal ribosomal protein uL4 family. Part of the 50S ribosomal subunit.

Its function is as follows. One of the primary rRNA binding proteins, this protein initially binds near the 5'-end of the 23S rRNA. It is important during the early stages of 50S assembly. It makes multiple contacts with different domains of the 23S rRNA in the assembled 50S subunit and ribosome. In terms of biological role, forms part of the polypeptide exit tunnel. The chain is Large ribosomal subunit protein uL4 from Chlamydia trachomatis serovar A (strain ATCC VR-571B / DSM 19440 / HAR-13).